A 338-amino-acid chain; its full sequence is Alanine racemase (338 aa).

Lysine 33 acts as the Proton acceptor; specific for D-alanine in catalysis. Lysine 33 bears the N6-(pyridoxal phosphate)lysine mark. Substrate is bound at residue arginine 126. Tyrosine 236 functions as the Proton acceptor; specific for L-alanine in the catalytic mechanism. Methionine 284 is a binding site for substrate.

This sequence belongs to the alanine racemase family. Pyridoxal 5'-phosphate serves as cofactor.

The catalysed reaction is L-alanine = D-alanine. It functions in the pathway amino-acid biosynthesis; D-alanine biosynthesis; D-alanine from L-alanine: step 1/1. Functionally, catalyzes the interconversion of L-alanine and D-alanine. May also act on other amino acids. The chain is Alanine racemase (alr) from Aquifex aeolicus (strain VF5).